A 217-amino-acid chain; its full sequence is Insulin-like growth factor 2.L (217 aa).

The N-terminal stretch at 1–56 (MEQLSCKHRSSSMEAEAQLCRQTESRSTQLPRMSVMRHLFLLSITFLVYTLDSAKA) is a signal peptide. The interval 57–83 (YRPTETLCGGELVDTLQFVCGDRGFYF) is b. Intrachain disulfides connect Cys64–Cys103, Cys76–Cys116, and Cys102–Cys107. Residues 84-96 (STNNGRSNRRSNR) are c. Residues 97–117 (GIVEECCFRSCDLELLETYCA) are a. Residues 118 to 123 (KPSKNE) are d. Residues 124 to 217 (RDVSTAPATA…LQQTSEPSHN (94 aa)) constitute a propeptide, e peptide.

The protein belongs to the insulin family.

It localises to the secreted. Its function is as follows. The insulin-like growth factors, isolated from plasma, are structurally and functionally related to insulin but have a much higher growth-promoting activity. Promotes anterior neural development. Acts as a ligand for integrin which is required for IGF2 signaling. The protein is Insulin-like growth factor 2.L of Xenopus laevis (African clawed frog).